Consider the following 294-residue polypeptide: MTSSESEIQARLLAQALPFMQKYENKTIVVKYGGHAMGDSTLGKAFAEDIALLKQSGINPIVVHGGGPQIGAMLSKMGIESKFEGGLRVTDAKTVEIVEMVLAGSINKEIVALINQTGEWAIGLCGKDGNMVFAEKAKKTVIDPDSNIERVLDLGFVGEVVEVDRTLLDLLAKSEMIPVIAPVAPGRDGATYNINADTFAGAIAGALHATRLLFLTDVPGVLDKNKELIKELTVSEARALIKDGTISGGMIPKVETCIDAIKAGVQGVVILNGKTPHSVLLEIFTEGAGTLIVP.

Substrate contacts are provided by residues 66-67 (GG), Arg88, and Asn193.

It belongs to the acetylglutamate kinase family. ArgB subfamily.

It localises to the cytoplasm. It catalyses the reaction N-acetyl-L-glutamate + ATP = N-acetyl-L-glutamyl 5-phosphate + ADP. Its pathway is amino-acid biosynthesis; L-arginine biosynthesis; N(2)-acetyl-L-ornithine from L-glutamate: step 2/4. Its function is as follows. Catalyzes the ATP-dependent phosphorylation of N-acetyl-L-glutamate. This chain is Acetylglutamate kinase, found in Agrobacterium fabrum (strain C58 / ATCC 33970) (Agrobacterium tumefaciens (strain C58)).